Reading from the N-terminus, the 463-residue chain is UDP-N-acetylmuramoylalanine--D-glutamate ligase (463 aa).

109 to 115 is an ATP binding site; the sequence is GTDGKST.

The protein belongs to the MurCDEF family.

The protein resides in the cytoplasm. The enzyme catalyses UDP-N-acetyl-alpha-D-muramoyl-L-alanine + D-glutamate + ATP = UDP-N-acetyl-alpha-D-muramoyl-L-alanyl-D-glutamate + ADP + phosphate + H(+). It functions in the pathway cell wall biogenesis; peptidoglycan biosynthesis. Its function is as follows. Cell wall formation. Catalyzes the addition of glutamate to the nucleotide precursor UDP-N-acetylmuramoyl-L-alanine (UMA). The sequence is that of UDP-N-acetylmuramoylalanine--D-glutamate ligase from Leptospira interrogans serogroup Icterohaemorrhagiae serovar copenhageni (strain Fiocruz L1-130).